A 317-amino-acid polypeptide reads, in one-letter code: Transcription factor elt-3 (317 aa).

The disordered stretch occupies residues 1 to 34; the sequence is METANYYLPSPPYSSTSSSDSRESRMNTPIPTTY. The GATA-type zinc finger occupies 244-268; sequence CSNCKTRETTLWRRNGEGGVECNAC. Residues 290–317 form a disordered region; it reads KRNRRPRNESPNSAIRNTHQRHGHAAAC. Residues 307–317 show a composition bias toward basic residues; that stretch reads THQRHGHAAAC.

As to quaternary structure, interacts with skn-1; interaction may enhance transcriptional activation of target genes. In terms of tissue distribution, expressed in head, trunk and tail. Expression decreases with age in the hypodermal cells and the pharyngeal-intestinal valve cells in the head, eventually showing little or no expression in about 14 day old worms. Expressed in hypodermal, but not in intestinal, cells at 1 day of age. Expression in the hypodermal and intestinal cells in the trunk region decreases quickly between day 3 and day 5 of adulthood. Expression in the tail between days 3 and 14 stays approximately uniform.

The protein resides in the nucleus. Its function is as follows. Transcription factor. Required, in concert with signal transducer and transcription factor sta-2, for up-regulation of the vacuolar H(+)-ATPase and acceleration of lysosome maturation at molt. Involved in regulating hypodermal development, perhaps acting downstream of transcription factor elt-1. Modulates environmentally induced changes in collagen gene expression, including rol-6, sqt-1, lon-3, and dpy-13. Involved in regulating expression of various genes, including gst-4, sod-3, ugt-9, and col-144. In response to oxidative stress, required to up-regulate expression of gst-4 mRNA. Regulated by the Insulin/IGF-1-like signaling (IIS) mediated pathway. Plays a role in longevity. May regulate the expression of genes that control sensitivity to osmotic stress, in conjunction with the GATA region-binding transcription factor elt-2. May form a transcriptional circuit with GATA factors egl-18 and elt-6. This Caenorhabditis elegans protein is Transcription factor elt-3.